We begin with the raw amino-acid sequence, 97 residues long: Large ribosomal subunit protein bL28 (97 aa).

The protein belongs to the bacterial ribosomal protein bL28 family.

The polypeptide is Large ribosomal subunit protein bL28 (Brucella abortus (strain S19)).